A 240-amino-acid chain; its full sequence is Dihydromonapterin reductase (240 aa).

Y152 functions as the Proton acceptor in the catalytic mechanism.

It belongs to the short-chain dehydrogenases/reductases (SDR) family. FolM subfamily.

It carries out the reaction (6S)-5,6,7,8-tetrahydrofolate + NADP(+) = 7,8-dihydrofolate + NADPH + H(+). It catalyses the reaction 7,8-dihydromonapterin + NADPH + H(+) = 5,6,7,8-tetrahydromonapterin + NADP(+). In terms of biological role, catalyzes the reduction of dihydromonapterin to tetrahydromonapterin. Also has lower activity with dihydrofolate. The polypeptide is Dihydromonapterin reductase (folM) (Escherichia coli O6:K15:H31 (strain 536 / UPEC)).